We begin with the raw amino-acid sequence, 581 residues long: Putative phospholipase B-like 3 (581 aa).

The first 16 residues, 1 to 16 (MKLLFFLFGLIFAVEQ), serve as a signal peptide directing secretion. N-linked (GlcNAc...) asparagine glycans are attached at residues Asn50, Asn82, Asn132, Asn169, Asn215, Asn309, Asn543, Asn546, and Asn560.

It belongs to the phospholipase B-like family.

It localises to the secreted. Its function is as follows. Putative phospholipase. This Caenorhabditis elegans protein is Putative phospholipase B-like 3.